Here is a 552-residue protein sequence, read N- to C-terminus: Thermosome subunit beta (552 aa).

The interval 531–552 is disordered; sequence AGKKGGSEPGGKKEKEEKSSED. Over residues 540 to 552 the composition is skewed to basic and acidic residues; the sequence is GGKKEKEEKSSED.

It belongs to the TCP-1 chaperonin family. In terms of assembly, forms a heterooligomeric complex of two stacked nine-membered rings; one of alpha and the other of beta subunits. Sometimes called a 'rosettasome'.

Its subcellular location is the cytoplasm. The catalysed reaction is ATP + H2O = ADP + phosphate + H(+). In terms of biological role, molecular chaperone; binds unfolded polypeptides in vitro, stimulates protein folding and has ATPase activity. One of the most abundant proteins in the cell at all temperatures. The sequence is that of Thermosome subunit beta (thsB) from Saccharolobus shibatae (strain ATCC 51178 / DSM 5389 / JCM 8931 / NBRC 15437 / B12) (Sulfolobus shibatae).